The sequence spans 511 residues: Maturase K (511 aa).

The protein belongs to the intron maturase 2 family. MatK subfamily.

It localises to the plastid. The protein localises to the chloroplast. In terms of biological role, usually encoded in the trnK tRNA gene intron. Probably assists in splicing its own and other chloroplast group II introns. This chain is Maturase K, found in Primula veris (Cowslip).